The chain runs to 217 residues: Large ribosomal subunit protein uL29m (217 aa).

Belongs to the universal ribosomal protein uL29 family. Component of the mitochondrial large ribosomal subunit. Mature mitochondrial ribosomes consist of a small (37S) and a large (54S) subunit. The 37S subunit contains at least 33 different proteins and 1 molecule of RNA (15S). The 54S subunit contains at least 45 different proteins and 1 molecule of RNA (21S).

The protein resides in the mitochondrion. The protein is Large ribosomal subunit protein uL29m (mrpl4) of Aspergillus clavatus (strain ATCC 1007 / CBS 513.65 / DSM 816 / NCTC 3887 / NRRL 1 / QM 1276 / 107).